Reading from the N-terminus, the 223-residue chain is Cytidylate kinase (223 aa).

12–20 provides a ligand contact to ATP; the sequence is GPSGVGKGT.

It belongs to the cytidylate kinase family. Type 1 subfamily.

Its subcellular location is the cytoplasm. The enzyme catalyses CMP + ATP = CDP + ADP. It catalyses the reaction dCMP + ATP = dCDP + ADP. The chain is Cytidylate kinase from Xylella fastidiosa (strain M12).